A 222-amino-acid polypeptide reads, in one-letter code: Sugar fermentation stimulation protein homolog (222 aa).

The protein belongs to the SfsA family.

This chain is Sugar fermentation stimulation protein homolog, found in Thermotoga maritima (strain ATCC 43589 / DSM 3109 / JCM 10099 / NBRC 100826 / MSB8).